The following is a 244-amino-acid chain: Rho-related GTP-binding protein RhoE (244 aa).

30–37 (GDSQCGRT) serves as a coordination point for GTP. The Effector region motif lies at 52 to 60 (YVPTVFENY). GTP-binding positions include 77–81 (DTSGS) and 135–138 (CKSD). Cys241 is modified (cysteine methyl ester). A lipid anchor (S-farnesyl cysteine) is attached at Cys241. Positions 242 to 244 (TVM) are cleaved as a propeptide — removed in mature form.

Belongs to the small GTPase superfamily. Rho family. Binds ROCK1. Interacts with UBXD5.

Its subcellular location is the cell membrane. In terms of biological role, binds GTP but lacks intrinsic GTPase activity and is resistant to Rho-specific GTPase-activating proteins. This is Rho-related GTP-binding protein RhoE (RND3) from Sus scrofa (Pig).